A 298-amino-acid polypeptide reads, in one-letter code: GTPase Era (298 aa).

The region spanning 8 to 176 is the Era-type G domain; it reads RCGRIAVIGR…VSDLLALLPE (169 aa). The interval 16–23 is G1; it reads GRPNVGKS. 16–23 contributes to the GTP binding site; it reads GRPNVGKS. A G2 region spans residues 42-46; that stretch reads QTTRH. The G3 stretch occupies residues 63 to 66; that stretch reads DTPG. GTP contacts are provided by residues 63 to 67 and 125 to 128; these read DTPGL and NKID. The tract at residues 125–128 is G4; that stretch reads NKID. A G5 region spans residues 155-157; that stretch reads VSA. A KH type-2 domain is found at 199-283; it reads VREQVMRQLG…FLETWVRVRK (85 aa).

This sequence belongs to the TRAFAC class TrmE-Era-EngA-EngB-Septin-like GTPase superfamily. Era GTPase family. As to quaternary structure, monomer.

It localises to the cytoplasm. Its subcellular location is the cell inner membrane. In terms of biological role, an essential GTPase that binds both GDP and GTP, with rapid nucleotide exchange. Plays a role in 16S rRNA processing and 30S ribosomal subunit biogenesis and possibly also in cell cycle regulation and energy metabolism. The sequence is that of GTPase Era from Xylella fastidiosa (strain M12).